A 518-amino-acid chain; its full sequence is Probable bifunctional methylthioribulose-1-phosphate dehydratase/enolase-phosphatase E1 (518 aa).

Residues 1–242 (MACCGGGRGE…AIKLYQLGID (242 aa)) form a methylthioribulose-1-phosphate dehydratase region. C114 serves as a coordination point for substrate. Positions 132 and 134 each coordinate Zn(2+). Residue E157 is the Proton donor/acceptor; for methylthioribulose-1-phosphate dehydratase activity of the active site. H207 is a Zn(2+) binding site. The enolase-phosphatase E1 stretch occupies residues 279 to 518 (VVLDIEGTTT…FRTIKSFSEI (240 aa)). Mg(2+) is bound by residues D282 and E284. Residues 417–418 (SS) and K451 each bind substrate. Mg(2+) is bound at residue D477.

The protein in the N-terminal section; belongs to the aldolase class II family. MtnB subfamily. This sequence in the C-terminal section; belongs to the HAD-like hydrolase superfamily. MasA/MtnC family. It depends on Zn(2+) as a cofactor. Requires Mg(2+) as cofactor.

It carries out the reaction 5-(methylsulfanyl)-D-ribulose 1-phosphate = 5-methylsulfanyl-2,3-dioxopentyl phosphate + H2O. The catalysed reaction is 5-methylsulfanyl-2,3-dioxopentyl phosphate + H2O = 1,2-dihydroxy-5-(methylsulfanyl)pent-1-en-3-one + phosphate. The protein operates within amino-acid biosynthesis; L-methionine biosynthesis via salvage pathway; L-methionine from S-methyl-5-thio-alpha-D-ribose 1-phosphate: step 2/6. It participates in amino-acid biosynthesis; L-methionine biosynthesis via salvage pathway; L-methionine from S-methyl-5-thio-alpha-D-ribose 1-phosphate: step 3/6. Its pathway is amino-acid biosynthesis; L-methionine biosynthesis via salvage pathway; L-methionine from S-methyl-5-thio-alpha-D-ribose 1-phosphate: step 4/6. This Oryza sativa subsp. indica (Rice) protein is Probable bifunctional methylthioribulose-1-phosphate dehydratase/enolase-phosphatase E1.